We begin with the raw amino-acid sequence, 234 residues long: Carbohydrate deacetylase (234 aa).

Mg(2+) is bound by residues H60 and H123.

The protein belongs to the YdjC deacetylase family. It depends on Mg(2+) as a cofactor.

Its function is as follows. Probably catalyzes the deacetylation of acetylated carbohydrates an important step in the degradation of oligosaccharides. The sequence is that of Carbohydrate deacetylase from Bacillus anthracis.